The sequence spans 255 residues: Octanoyltransferase (255 aa).

Residues 54-238 form the BPL/LPL catalytic domain; it reads GDANELVWLL…SFTTIFGATV (185 aa). Residues 92–99, 167–169, and 180–182 each bind substrate; these read RGGQLTYH, AIG, and GIA. The active-site Acyl-thioester intermediate is the Cys198.

It belongs to the LipB family.

It is found in the cytoplasm. The catalysed reaction is octanoyl-[ACP] + L-lysyl-[protein] = N(6)-octanoyl-L-lysyl-[protein] + holo-[ACP] + H(+). Its pathway is protein modification; protein lipoylation via endogenous pathway; protein N(6)-(lipoyl)lysine from octanoyl-[acyl-carrier-protein]: step 1/2. Catalyzes the transfer of endogenously produced octanoic acid from octanoyl-acyl-carrier-protein onto the lipoyl domains of lipoate-dependent enzymes. Lipoyl-ACP can also act as a substrate although octanoyl-ACP is likely to be the physiological substrate. The chain is Octanoyltransferase from Rhodopseudomonas palustris (strain BisB5).